The chain runs to 521 residues: Protein YjiT (521 aa).

This is Protein YjiT (yjiT) from Escherichia coli (strain K12).